Consider the following 178-residue polypeptide: MKNMEQQHIEVVGKLGSTYGIRGWLRIYSSTEQAESIFDYQPWFLKIKGEWQSIELENWRYHNHEIIVKLKGVDDREAAQILANVEIGVDLSVFPELEEGDYYWHDLIGCTVVNLEGYTMGTVTEMMETGSNDVLVVKANTKDAFGKQERLIPFLYEQVVKRVDLTTKTIEVDWDAGF.

The PRC barrel domain occupies 99 to 178; the sequence is EGDYYWHDLI…TIEVDWDAGF (80 aa).

Belongs to the RimM family. Binds ribosomal protein uS19.

Its subcellular location is the cytoplasm. Functionally, an accessory protein needed during the final step in the assembly of 30S ribosomal subunit, possibly for assembly of the head region. Essential for efficient processing of 16S rRNA. May be needed both before and after RbfA during the maturation of 16S rRNA. It has affinity for free ribosomal 30S subunits but not for 70S ribosomes. The polypeptide is Ribosome maturation factor RimM (Haemophilus influenzae (strain ATCC 51907 / DSM 11121 / KW20 / Rd)).